The primary structure comprises 547 residues: Chaperonin GroEL (547 aa).

ATP is bound by residues 30–33 (TLGP), Lys-51, 87–91 (DGTTT), Gly-415, and Asp-496. The interval 527–547 (SDKEEPMPMRGGMGGMGGMDF) is disordered. Positions 537 to 547 (GGMGGMGGMDF) are enriched in gly residues.

It belongs to the chaperonin (HSP60) family. As to quaternary structure, forms a cylinder of 14 subunits composed of two heptameric rings stacked back-to-back. Interacts with the co-chaperonin GroES.

It localises to the cytoplasm. The catalysed reaction is ATP + H2O + a folded polypeptide = ADP + phosphate + an unfolded polypeptide.. In terms of biological role, together with its co-chaperonin GroES, plays an essential role in assisting protein folding. The GroEL-GroES system forms a nano-cage that allows encapsulation of the non-native substrate proteins and provides a physical environment optimized to promote and accelerate protein folding. The chain is Chaperonin GroEL from Rickettsia massiliae (strain Mtu5).